Consider the following 280-residue polypeptide: uncharacterized protein (280 aa).

CBS domains lie at 10-67 (QNKK…GSKY), 90-146 (MEEN…KIDE), 154-209 (ITRD…DWAF), and 229-280 (MKRD…KYFA).

This is an uncharacterized protein from Methanocaldococcus jannaschii (strain ATCC 43067 / DSM 2661 / JAL-1 / JCM 10045 / NBRC 100440) (Methanococcus jannaschii).